A 236-amino-acid polypeptide reads, in one-letter code: LexA repressor (236 aa).

A DNA-binding region (H-T-H motif) is located at residues 26-46 (FDEMKEALDLASKSGIHRLIT). Positions 84 to 107 (SPSVIEGGQGRSSPAPRPAANNDD) are disordered. Catalysis depends on for autocatalytic cleavage activity residues serine 157 and lysine 195.

Belongs to the peptidase S24 family. In terms of assembly, homodimer.

The enzyme catalyses Hydrolysis of Ala-|-Gly bond in repressor LexA.. Represses a number of genes involved in the response to DNA damage (SOS response), including recA and lexA. In the presence of single-stranded DNA, RecA interacts with LexA causing an autocatalytic cleavage which disrupts the DNA-binding part of LexA, leading to derepression of the SOS regulon and eventually DNA repair. In Chelativorans sp. (strain BNC1), this protein is LexA repressor.